The chain runs to 968 residues: Dynein axonemal intermediate chain 3 (968 aa).

Residues 1–33 show a composition bias toward basic and acidic residues; that stretch reads MKDTSSKRPKSKEANKKKTKDKSNADNLPKPEE. Disordered stretches follow at residues 1–39 and 136–166; these read MKDTSSKRPKSKEANKKKTKDKSNADNLPKPEEAAASEP and KPPAEGADEQMEDEEQQEEEEEMMTKTPEPQ. Residues 141–157 are compositionally biased toward acidic residues; sequence GADEQMEDEEQQEEEEE. WD repeat units follow at residues 407 to 447, 480 to 536, and 712 to 753; these read ECPD…DRLQ, GHKA…VMVH, and VYSK…RQPS. A coiled-coil region spans residues 830-857; sequence LHTHTDQLRVLEERVREAKQNLLAVSDR. Positions 897–919 are enriched in basic and acidic residues; sequence KRQSDHQKKKKETEAEQQKKKTE. Residues 897–930 form a disordered region; the sequence is KRQSDHQKKKKETEAEQQKKKTELVTPPKQEEEV.

In terms of assembly, part of the multisubunit axonemal dynein complex formed at least of two heavy chains and a number of intermediate and light chains.

The protein localises to the cytoplasm. Functionally, may be involved in the regulation of cilia function. The protein is Dynein axonemal intermediate chain 3 (dnai3) of Danio rerio (Zebrafish).